The primary structure comprises 212 residues: Protein-L-isoaspartate O-methyltransferase (212 aa).

Residue Ser60 is part of the active site.

The protein belongs to the methyltransferase superfamily. L-isoaspartyl/D-aspartyl protein methyltransferase family.

The protein resides in the cytoplasm. The enzyme catalyses [protein]-L-isoaspartate + S-adenosyl-L-methionine = [protein]-L-isoaspartate alpha-methyl ester + S-adenosyl-L-homocysteine. Functionally, catalyzes the methyl esterification of L-isoaspartyl residues in peptides and proteins that result from spontaneous decomposition of normal L-aspartyl and L-asparaginyl residues. It plays a role in the repair and/or degradation of damaged proteins. This chain is Protein-L-isoaspartate O-methyltransferase, found in Methanococcus maripaludis (strain DSM 14266 / JCM 13030 / NBRC 101832 / S2 / LL).